A 309-amino-acid chain; its full sequence is UPF0282 protein Saci_0277 (309 aa).

Belongs to the UPF0282 family.

The sequence is that of UPF0282 protein Saci_0277 from Sulfolobus acidocaldarius (strain ATCC 33909 / DSM 639 / JCM 8929 / NBRC 15157 / NCIMB 11770).